We begin with the raw amino-acid sequence, 286 residues long: Bifunctional protein FolD (286 aa).

NADP(+) is bound by residues 166-168 and Ile232; that span reads GAS.

It belongs to the tetrahydrofolate dehydrogenase/cyclohydrolase family. As to quaternary structure, homodimer.

The enzyme catalyses (6R)-5,10-methylene-5,6,7,8-tetrahydrofolate + NADP(+) = (6R)-5,10-methenyltetrahydrofolate + NADPH. It carries out the reaction (6R)-5,10-methenyltetrahydrofolate + H2O = (6R)-10-formyltetrahydrofolate + H(+). Its pathway is one-carbon metabolism; tetrahydrofolate interconversion. In terms of biological role, catalyzes the oxidation of 5,10-methylenetetrahydrofolate to 5,10-methenyltetrahydrofolate and then the hydrolysis of 5,10-methenyltetrahydrofolate to 10-formyltetrahydrofolate. This is Bifunctional protein FolD from Vibrio campbellii (strain ATCC BAA-1116).